The chain runs to 53 residues: Photosystem II reaction center protein K (53 aa).

The propeptide occupies 1 to 16; it reads MFYTNVETLLNTNCFA. The helical transmembrane segment at 28–48 threads the bilayer; it reads LVDVLPIIPLLFLLLAFVWQA.

It belongs to the PsbK family. In terms of assembly, PSII is composed of 1 copy each of membrane proteins PsbA, PsbB, PsbC, PsbD, PsbE, PsbF, PsbH, PsbI, PsbJ, PsbK, PsbL, PsbM, PsbT, PsbY, PsbZ, Psb30/Ycf12, at least 3 peripheral proteins of the oxygen-evolving complex and a large number of cofactors. It forms dimeric complexes.

It is found in the plastid. The protein localises to the chloroplast thylakoid membrane. One of the components of the core complex of photosystem II (PSII). PSII is a light-driven water:plastoquinone oxidoreductase that uses light energy to abstract electrons from H(2)O, generating O(2) and a proton gradient subsequently used for ATP formation. It consists of a core antenna complex that captures photons, and an electron transfer chain that converts photonic excitation into a charge separation. In Euglena anabaena (Euglenaria anabaena), this protein is Photosystem II reaction center protein K.